Here is a 343-residue protein sequence, read N- to C-terminus: Cyclic AMP-AMP-AMP synthase (343 aa).

It belongs to the CD-NTase family. D01 subfamily. Mg(2+) is required as a cofactor.

The enzyme catalyses 3 ATP = 2',3',3'-c-tri-AMP + 3 diphosphate. In terms of biological role, cyclic nucleotide synthase (second messenger synthase) of a CBASS antivirus system. CBASS (cyclic oligonucleotide-based antiphage signaling system) provides immunity against bacteriophage. The CD-NTase protein synthesizes cyclic nucleotides in response to infection; these serve as specific second messenger signals. The signals activate a diverse range of effectors, leading to bacterial cell death and thus abortive phage infection. A type II-C(AAAA) CBASS system. Cyclic trinucleotide synthase that catalyzes the synthesis of 2',3',3'-cyclic AMP-AMP-AMP (2',3',3'-c-tri-AMP or 2'3'3'-cAAA) as the major product, as well as another cyclic AMP(4) 2'-5'-linked minor product that acts as a second messenger for cell signal transduction. The polypeptide is Cyclic AMP-AMP-AMP synthase (Acinetobacter sp. (strain ATCC 27244 / 9458)).